A 794-amino-acid chain; its full sequence is Interphotoreceptor matrix proteoglycan 1 (794 aa).

The N-terminal stretch at 1–20 (MHLEAARVIFFLWIFLQVQG) is a signal peptide. Residues 202–213 (MTTAQRNPQLHP) are compositionally biased toward polar residues. 3 disordered regions span residues 202–221 (MTTA…RVPT), 314–355 (KGKA…LYPT), and 413–449 (SPEL…AMTS). The SEA 1 domain occupies 236-357 (LEQKVELSIS…KQRELYPTAS (122 aa)). Residues 332–351 (NKIESEGDPRGTTEEEKQRE) are compositionally biased toward basic and acidic residues. Residues threonine 425 and threonine 439 are each glycosylated (O-linked (GalNAc...) threonine). The O-linked (GalNAc...) serine glycan is linked to serine 443. Residues threonine 448 and threonine 450 are each glycosylated (O-linked (GalNAc...) threonine). The region spanning 579–692 (RELVVFFSLR…YSLDVEPADQ (114 aa)) is the SEA 2 domain. N-linked (GlcNAc...) asparagine glycosylation occurs at asparagine 624. The Heparin- and hyaluronan-binding signature appears at 629–637 (KQLEILNFR). N-linked (GlcNAc...) asparagine glycosylation is present at asparagine 656.

In terms of processing, highly glycosylated (N- and O-linked carbohydrates and sialic acid).

Its subcellular location is the cell projection. It localises to the cilium. It is found in the photoreceptor outer segment. The protein localises to the secreted. The protein resides in the extracellular space. Its subcellular location is the extracellular matrix. It localises to the interphotoreceptor matrix. It is found in the photoreceptor inner segment. Its function is as follows. Chondroitin sulfate-, heparin- and hyaluronan-binding protein. May serve to form a basic macromolecular scaffold comprising the insoluble interphotoreceptor matrix. The protein is Interphotoreceptor matrix proteoglycan 1 (IMPG1) of Bos taurus (Bovine).